A 133-amino-acid chain; its full sequence is Basic phospholipase A2 beta-bungarotoxin A-AL2 chain (133 aa).

The N-terminal stretch at 1-5 (FLLGA) is a signal peptide. Residues 6-13 (ANIPPHPL) constitute a propeptide that is removed on maturation. 6 disulfide bridges follow: C40-C132, C42-C58, C57-C113, C64-C106, C74-C99, and C92-C104. The Ca(2+) site is built by Y41, G43, and G45. H61 is a catalytic residue. D62 serves as a coordination point for Ca(2+). D107 is a catalytic residue.

Belongs to the phospholipase A2 family. Group I subfamily. D49 sub-subfamily. As to quaternary structure, heterodimer; disulfide-linked. The A chains have phospholipase A2 activity and the B chains show homology with the basic protease inhibitors. The cofactor is Ca(2+). As to expression, expressed by the venom gland.

The protein localises to the secreted. It carries out the reaction a 1,2-diacyl-sn-glycero-3-phosphocholine + H2O = a 1-acyl-sn-glycero-3-phosphocholine + a fatty acid + H(+). Functionally, snake venom phospholipase A2 (PLA2) that inhibits neuromuscular transmission by blocking acetylcholine release from the nerve termini. PLA2 catalyzes the calcium-dependent hydrolysis of the 2-acyl groups in 3-sn-phosphoglycerides. This is Basic phospholipase A2 beta-bungarotoxin A-AL2 chain from Bungarus multicinctus (Many-banded krait).